Consider the following 506-residue polypeptide: Aldehyde dehydrogenase [NAD(P)+] 1 (506 aa).

The active-site Proton acceptor is E268. The active-site Nucleophile is C302.

The protein belongs to the aldehyde dehydrogenase family.

The protein localises to the cytoplasm. It catalyses the reaction an aldehyde + NAD(+) + H2O = a carboxylate + NADH + 2 H(+). It carries out the reaction 3-aminopropanal + NAD(+) + H2O = beta-alanine + NADH + 2 H(+). Cytoplasmic aldehyde dehydrogenase involved in ethanol oxidation. Required for pantothenic acid production through the conversion of 3-aminopropanal to beta-alanine, an intermediate in pantothenic acid (vitamin B5) and coenzyme A (CoA) biosynthesis. This chain is Aldehyde dehydrogenase [NAD(P)+] 1 (ALD2), found in Saccharomyces cerevisiae (strain ATCC 204508 / S288c) (Baker's yeast).